The following is a 62-amino-acid chain: Photosystem II reaction center protein Z (62 aa).

The next 2 helical transmembrane spans lie at 8-28 and 41-61; these read SVFA…VVLA and FSGA…NSFI.

It belongs to the PsbZ family. In terms of assembly, PSII is composed of 1 copy each of membrane proteins PsbA, PsbB, PsbC, PsbD, PsbE, PsbF, PsbH, PsbI, PsbJ, PsbK, PsbL, PsbM, PsbT, PsbY, PsbZ, Psb30/Ycf12, at least 3 peripheral proteins of the oxygen-evolving complex and a large number of cofactors. It forms dimeric complexes.

The protein resides in the plastid. The protein localises to the chloroplast thylakoid membrane. Its function is as follows. May control the interaction of photosystem II (PSII) cores with the light-harvesting antenna, regulates electron flow through the 2 photosystem reaction centers. PSII is a light-driven water plastoquinone oxidoreductase, using light energy to abstract electrons from H(2)O, generating a proton gradient subsequently used for ATP formation. This chain is Photosystem II reaction center protein Z, found in Chaetosphaeridium globosum (Charophycean green alga).